The following is a 545-amino-acid chain: Chaperonin GroEL (545 aa).

Residues 30 to 33 (TLGP), Lys51, 87 to 91 (DGTTT), Gly415, and Asp495 contribute to the ATP site.

The protein belongs to the chaperonin (HSP60) family. As to quaternary structure, forms a cylinder of 14 subunits composed of two heptameric rings stacked back-to-back. Interacts with the co-chaperonin GroES.

Its subcellular location is the cytoplasm. The catalysed reaction is ATP + H2O + a folded polypeptide = ADP + phosphate + an unfolded polypeptide.. In terms of biological role, together with its co-chaperonin GroES, plays an essential role in assisting protein folding. The GroEL-GroES system forms a nano-cage that allows encapsulation of the non-native substrate proteins and provides a physical environment optimized to promote and accelerate protein folding. The protein is Chaperonin GroEL of Shewanella baltica (strain OS185).